A 320-amino-acid polypeptide reads, in one-letter code: Dual oxidase maturation factor 2 (320 aa).

A helical membrane pass occupies residues 22–42 (VPLLIVILVFLSLAASFLFIL). Over 43-51 (PGIRGHSRW) the chain is Cytoplasmic. Residues 52–72 (FWLVRVLLSLFIGAEIVAVHF) traverse the membrane as a helical segment. Topologically, residues 73–183 (SGDWFVGRVW…HLAGHYAAAT (111 aa)) are extracellular. N-linked (GlcNAc...) asparagine glycosylation is found at N84, N109, and N121. Residues 184–204 (LWVAFCFWIIANALLSMPAPL) traverse the membrane as a helical segment. Topologically, residues 205-206 (YG) are cytoplasmic. The helical transmembrane segment at 207–227 (GLALLTTGAFTLFGVFAFASI) threads the bilayer. At 228–249 (SSVPLCHFRLGSAVLTPYYGAS) the chain is on the extracellular side. A helical membrane pass occupies residues 250–270 (FWLTLATGILSLLLGGAVVIL). Residues 271–320 (HYTRPSALRSFLDLSVKDCSNQAKGNSPLTLNNPQHEQLKSPDLNITTLL) lie on the Cytoplasmic side of the membrane.

It belongs to the DUOXA family. As to quaternary structure, heterodimer with DUXA2; disulfide-linked. Interacts with CSNK1G2. Post-translationally, N-glycosylated.

It is found in the endoplasmic reticulum membrane. Functionally, required for the maturation and the transport from the endoplasmic reticulum to the plasma membrane of functional DUOX2. May play a role in thyroid hormone synthesis. The protein is Dual oxidase maturation factor 2 (Duoxa2) of Mus musculus (Mouse).